Reading from the N-terminus, the 173-residue chain is Putative 2-oxo-4-hydroxy-4-carboxy-5-ureidoimidazoline decarboxylase (173 aa).

His-67 (proton donor) is an active-site residue. Substrate-binding positions include Pro-68, 84 to 88 (SQREQ), and 119 to 123 (FVLAA). The Microbody targeting signal motif lies at 171–173 (AKL).

The protein belongs to the OHCU decarboxylase family. Apparently not expressed.

It localises to the peroxisome. It carries out the reaction 5-hydroxy-2-oxo-4-ureido-2,5-dihydro-1H-imidazole-5-carboxylate + H(+) = (S)-allantoin + CO2. Its pathway is purine metabolism; urate degradation; (S)-allantoin from urate: step 3/3. Its function is as follows. Catalyzes the stereoselective decarboxylation of 2-oxo-4-hydroxy-4-carboxy-5-ureidoimidazoline (OHCU) to (S)-allantoin. The sequence is that of Putative 2-oxo-4-hydroxy-4-carboxy-5-ureidoimidazoline decarboxylase (URAD) from Homo sapiens (Human).